The primary structure comprises 1118 residues: Cytospin-A (1118 aa).

Disordered stretches follow at residues 1-50 (MKKA…AALS), 75-175 (KKSN…DNQI), 294-324 (SLSP…GSVE), and 359-391 (SSDD…NASE). Composition is skewed to low complexity over residues 34-48 (APTG…AAAA), 80-90 (SSAAPSAPAPA), and 99-113 (KSST…RSTS). Basic and acidic residues predominate over residues 120 to 131 (SSTRERLRERTR). Polar residues predominate over residues 133–145 (NQSKKLPSVSQGA). Residues 158 to 171 (TATEGDIRMSKSKS) show a composition bias toward basic and acidic residues. Positions 168–281 (KSKSDNQISD…LNALGFSLEQ (114 aa)) form a coiled coil. Polar residues predominate over residues 294–304 (SLSPEITPGNQ). The span at 359-373 (SSDDALDAPSSSESE) shows a compositional bias: low complexity. Phosphoserine occurs at positions 385, 386, and 390. Coiled-coil stretches lie at residues 395 to 450 (ACLT…MESL) and 488 to 808 (RYME…RGRV). 3 positions are modified to phosphoserine: Ser869, Ser882, and Ser888. Residues 916-999 (EHLLRTSSTS…STRSRIREER (84 aa)) are disordered. Over residues 947-957 (RSSEEMKRDIS) the composition is skewed to basic and acidic residues. Low complexity predominate over residues 972 to 992 (TTSPQLSLSSSPTASVTPSTR). One can recognise a Calponin-homology (CH) domain in the interval 1012-1117 (GSKRNALLKW…YVTAIYKYFE (106 aa)).

This sequence belongs to the cytospin-A family. In terms of assembly, may interact with both microtubules and actin cytoskeleton.

It localises to the cytoplasm. The protein localises to the cytoskeleton. Its subcellular location is the spindle. The protein resides in the cell junction. It is found in the gap junction. In terms of biological role, involved in cytokinesis and spindle organization. May play a role in actin cytoskeleton organization and microtubule stabilization and hence required for proper cell adhesion and migration. The protein is Cytospin-A (Specc1l) of Rattus norvegicus (Rat).